Reading from the N-terminus, the 332-residue chain is tRNA (cytosine(38)-C(5))-methyltransferase (332 aa).

The SAM-dependent MTase C5-type domain occupies histidine 3 to glutamate 332. S-adenosyl-L-homocysteine contacts are provided by residues isoleucine 12 to glycine 14, aspartate 33 to isoleucine 34, asparagine 55 to isoleucine 56, and serine 75. Cysteine 78 is an active-site residue. S-adenosyl-L-homocysteine is bound by residues glutamine 79, serine 97, and asparagine 316–serine 317.

This sequence belongs to the class I-like SAM-binding methyltransferase superfamily. C5-methyltransferase family.

The protein resides in the cytoplasm. It is found in the nucleus. It carries out the reaction cytidine(38) in tRNA + S-adenosyl-L-methionine = 5-methylcytidine(38) in tRNA + S-adenosyl-L-homocysteine + H(+). The enzyme catalyses a 2'-deoxycytidine in DNA + S-adenosyl-L-methionine = a 5-methyl-2'-deoxycytidine in DNA + S-adenosyl-L-homocysteine + H(+). Its function is as follows. Specifically methylates cytosine 38 in the anticodon loop of tRNA(Asp). Also has DNA (cytosine-5)-methyltransferase activity. Shows affinity for both tRNA(Asp) and DNA substrates. The protein is tRNA (cytosine(38)-C(5))-methyltransferase of Spodoptera frugiperda (Fall armyworm).